A 125-amino-acid polypeptide reads, in one-letter code: Cu-Zn superoxide dismutase-like protein (125 aa).

An intrachain disulfide couples cysteine 52 to cysteine 102.

The protein belongs to the Cu-Zn superoxide dismutase family.

It is found in the host cytoplasm. Its function is as follows. Virion protein with no enzymatic activity. The chain is Cu-Zn superoxide dismutase-like protein from Mus musculus (Mouse).